The following is a 98-amino-acid chain: NADH-ubiquinone oxidoreductase chain 4L (98 aa).

3 helical membrane-spanning segments follow: residues 1 to 21 (MTPV…GLAF), 29 to 49 (ALLC…LWAL), and 59 to 79 (APML…ALLV).

The protein belongs to the complex I subunit 4L family.

The protein localises to the mitochondrion membrane. It carries out the reaction a ubiquinone + NADH + 5 H(+)(in) = a ubiquinol + NAD(+) + 4 H(+)(out). In terms of biological role, core subunit of the mitochondrial membrane respiratory chain NADH dehydrogenase (Complex I) which catalyzes electron transfer from NADH through the respiratory chain, using ubiquinone as an electron acceptor. Part of the enzyme membrane arm which is embedded in the lipid bilayer and involved in proton translocation. The protein is NADH-ubiquinone oxidoreductase chain 4L (MT-ND4L) of Carassius auratus (Goldfish).